Consider the following 385-residue polypeptide: Trichodiene synthase (385 aa).

The protein belongs to the trichodiene synthase family.

The enzyme catalyses (2E,6E)-farnesyl diphosphate = trichodiene + diphosphate. Its pathway is sesquiterpene biosynthesis; trichothecene biosynthesis. Functionally, TS is a member of the terpene cyclase group of enzymes. It catalyzes the isomerization and cyclization of farnesyl pyro-phosphate to form trichodiene, the first cyclic intermediate in the biosynthetic pathway for trichothecenes. It serves to branch trichothecene biosynthesis from the isoprenoid pathway. The sequence is that of Trichodiene synthase (TRI5) from Paramyrothecium roridum (Myrothecium leaf spot fungus).